Reading from the N-terminus, the 361-residue chain is MNDIERLEKEICLALEAASDEQTLETVRIAALGKKGCISEKLKALGKMDVEERHKVGPVLNGLKNRVLELWVQKRDLLRRQAMNKRLSRETVDVTLPVRSSPLERGRIHPISQVIEEIIAIYANMGFSLAEGPDIETDYYNFTALNFPEGHPAREMHDTFFFDVDKTGERKLLRTHTSPVQIRTMEKQKAPIRIIIPGKTYRMDSDATHSPMFHQVEGLVIDKTSTIAHMMWLHETFCKAFFEVPSVKMRFRPSFFPFTEPSMEVDIQCDRSGSKVKFGEGQDWLEILGCGMVHPYVLQNVGLDPDVYQGFAWGMGIDRIAMLKYGMPDLRAFFDADLRWLDHYGFRCFDMPAFFPGLRNE.

E260 contacts Mg(2+).

Belongs to the class-II aminoacyl-tRNA synthetase family. Phe-tRNA synthetase alpha subunit type 1 subfamily. In terms of assembly, tetramer of two alpha and two beta subunits. The cofactor is Mg(2+).

The protein localises to the cytoplasm. The catalysed reaction is tRNA(Phe) + L-phenylalanine + ATP = L-phenylalanyl-tRNA(Phe) + AMP + diphosphate + H(+). This is Phenylalanine--tRNA ligase alpha subunit from Bartonella quintana (strain Toulouse) (Rochalimaea quintana).